A 115-amino-acid polypeptide reads, in one-letter code: NADH-ubiquinone oxidoreductase chain 3 (115 aa).

A run of 3 helical transmembrane segments spans residues leucine 3–tryptophan 23, phenylalanine 55–leucine 75, and threonine 86–tryptophan 106.

The protein belongs to the complex I subunit 3 family. As to quaternary structure, core subunit of respiratory chain NADH dehydrogenase (Complex I) which is composed of 45 different subunits. Interacts with TMEM186. Interacts with TMEM242.

The protein localises to the mitochondrion inner membrane. It carries out the reaction a ubiquinone + NADH + 5 H(+)(in) = a ubiquinol + NAD(+) + 4 H(+)(out). Core subunit of the mitochondrial membrane respiratory chain NADH dehydrogenase (Complex I) which catalyzes electron transfer from NADH through the respiratory chain, using ubiquinone as an electron acceptor. Essential for the catalytic activity of complex I. The protein is NADH-ubiquinone oxidoreductase chain 3 of Rattus norvegicus (Rat).